A 453-amino-acid polypeptide reads, in one-letter code: Pup--protein ligase (453 aa).

Residue Glu-9 participates in Mg(2+) binding. An ATP-binding site is contributed by Arg-53. Tyr-55 serves as a coordination point for Mg(2+). The active-site Proton acceptor is Asp-57. Position 63 (Glu-63) interacts with Mg(2+). Thr-66 and Trp-420 together coordinate ATP.

This sequence belongs to the Pup ligase/Pup deamidase family. Pup-conjugating enzyme subfamily.

The catalysed reaction is ATP + [prokaryotic ubiquitin-like protein]-L-glutamate + [protein]-L-lysine = ADP + phosphate + N(6)-([prokaryotic ubiquitin-like protein]-gamma-L-glutamyl)-[protein]-L-lysine.. Its pathway is protein degradation; proteasomal Pup-dependent pathway. It functions in the pathway protein modification; protein pupylation. In terms of biological role, catalyzes the covalent attachment of the prokaryotic ubiquitin-like protein modifier Pup to the proteasomal substrate proteins, thereby targeting them for proteasomal degradation. This tagging system is termed pupylation. The ligation reaction involves the side-chain carboxylate of the C-terminal glutamate of Pup and the side-chain amino group of a substrate lysine. In Streptomyces avermitilis (strain ATCC 31267 / DSM 46492 / JCM 5070 / NBRC 14893 / NCIMB 12804 / NRRL 8165 / MA-4680), this protein is Pup--protein ligase.